Reading from the N-terminus, the 674-residue chain is MNHSNQMHHDNHESHNHHSGHAHHHGNFKVKFFVSLIFAIPIILLSPLMGINLPFQFTFPGSEWVVLILSTILFFYGGKPFLSGGKDEIATKKPGMMTLVALGISVAYIYSLYAFYMNNFSSATGHTMDFFWELATLILIMLLGHWIEMNAVGNAGDALKKMAELLPNSAIKVMDNGQREEVKISDIMTDDIVEVKAGESIPTDGIIVQGQTSIDESLVTGESKKVQKNQNDNVIGGSINGSGTIQVKVTAVGEDGYLSQVMGLVNQAQNDKSSAELLSDKVAGYLFYFAVIVGVISFIVWMLIQNDVDFALERLVTVLVIACPHALGLAIPLVTARSTSIGAHNGLIIKNRESVEIAQHIDYVMMDKTGTLTEGNFSVNHYESFKNDLSNDTILSLFASLESQSNHPLAISIVDFAKSKNVSFTNPQDVNNIPGVGLEGLIDNKTYKITNVSYLDKHKLNYDDDLFTKLAQQGNSISYLIEDQQVIGMIAQGDQIKESSKQMVADLLSRNITPVMLTGDNNEVAHAVAKELGISDVHAQLMPEDKESIIKDYQSNGNKVMMVGDGINDAPSLIRADIGIAIGAGTDVAVDSGDIILVKSNPSDIVHFLTLSNNTMRKMVQNLWWGAGYNIVAVPLAAGALAFVGLILSPAVGAILMSLSTVIVAINAFTLKLK.

The tract at residues 1 to 22 (MNHSNQMHHDNHESHNHHSGHA) is disordered. Residues 7–16 (MHHDNHESHN) are compositionally biased toward basic and acidic residues. Helical transmembrane passes span 32–52 (FFVS…MGIN), 57–77 (FTFP…FFYG), 95–115 (GMMT…LYAF), 127–147 (TMDF…GHWI), 284–304 (GYLF…WMLI), and 315–335 (LVTV…PLVT). Aspartate 367 serves as the catalytic 4-aspartylphosphate intermediate. The Mg(2+) site is built by aspartate 565 and aspartate 569. 2 helical membrane passes run 623-645 (LWWG…AFVG) and 649-671 (SPAV…AFTL).

It belongs to the cation transport ATPase (P-type) (TC 3.A.3) family. Type IB subfamily.

The protein resides in the cell membrane. The enzyme catalyses Cu(+)(in) + ATP + H2O = Cu(+)(out) + ADP + phosphate + H(+). In terms of biological role, involved in copper transport. This chain is Probable copper-transporting P-type ATPase B (copB), found in Staphylococcus epidermidis (strain ATCC 12228 / FDA PCI 1200).